The chain runs to 358 residues: Aurora kinase (358 aa).

Residues 1 to 49 form a disordered region; that stretch reads MENKATLARNIGEKRVSPRSKVNGTGKSWRISYSPQRMDGVSSGRNVSK. Residues 20 to 35 show a composition bias toward polar residues; that stretch reads SKVNGTGKSWRISYSP. In terms of domain architecture, Protein kinase spans 100–358; the sequence is FEVGRKLGKG…PWILKNKPFW (259 aa). ATP-binding positions include 106–114 and Lys-129; that span reads LGKGKFGKV. The Proton acceptor role is filled by Asp-223.

The protein belongs to the protein kinase superfamily. Ser/Thr protein kinase family. Aurora subfamily.

It localises to the nucleus. The protein resides in the cytoplasm. The protein localises to the cytoskeleton. It is found in the spindle. Its subcellular location is the chromosome. It localises to the centromere. The protein resides in the kinetochore. It catalyses the reaction L-seryl-[protein] + ATP = O-phospho-L-seryl-[protein] + ADP + H(+). The catalysed reaction is L-threonyl-[protein] + ATP = O-phospho-L-threonyl-[protein] + ADP + H(+). Functionally, component of the chromosomal passenger complex (CPC), a complex that acts as a key regulator of chromosome segregation and cytokinesis. Has a role in error-correction of aberrent kinetochore-microtubule attachments to ensure that sister kinetochores become bioriented and connect to opposite poles by promoting spindle assembly checkpoint signaling. The sequence is that of Aurora kinase (IPL1) from Candida glabrata (strain ATCC 2001 / BCRC 20586 / JCM 3761 / NBRC 0622 / NRRL Y-65 / CBS 138) (Yeast).